We begin with the raw amino-acid sequence, 130 residues long: Small ribosomal subunit protein uS9 (130 aa).

The protein belongs to the universal ribosomal protein uS9 family.

The sequence is that of Small ribosomal subunit protein uS9 from Yersinia pseudotuberculosis serotype O:1b (strain IP 31758).